A 2919-amino-acid polypeptide reads, in one-letter code: Cadherin EGF LAG seven-pass G-type receptor 2 (2919 aa).

An N-terminal signal peptide occupies residues 1–31; that stretch reads MRSRAASAPLPTPLLPLLLLLLLLPPSPLLG. Residues 32–2380 are Extracellular-facing; sequence DQVGPCRSLG…GEILPLKTLT (2349 aa). The interval 156-194 is disordered; sequence LRAGEGSPEESLGGRRKRNVNTAPQFQPPSYQATVPENQ. Residues 175–194 show a composition bias toward polar residues; sequence VNTAPQFQPPSYQATVPENQ. 9 Cadherin domains span residues 182–289, 290–399, 400–505, 506–610, 611–712, 713–815, 816–921, 922–1023, and 1028–1146; these read QPPS…DPVF, EQQE…APQF, SEKR…APIF, VSTP…NPTF, TQPE…RPVF, QSSH…APQF, LRDS…PPVF, EQDE…PPVL, and ILFN…SPLL. Asn-486, Asn-557, and Asn-701 each carry an N-linked (GlcNAc...) asparagine glycan. N-linked (GlcNAc...) asparagine glycans are attached at residues Asn-1036, Asn-1076, Asn-1182, and Asn-1212. The 59-residue stretch at 1228–1286 folds into the EGF-like 1; atypical domain; the sequence is DDNICLREPCENYMRCVSVLRFDSSAPFIASSSVLFRPIHPVGGLRCRCPPGFTGDYCE. One can recognise an EGF-like 2; calcium-binding domain in the interval 1288 to 1318; sequence EVDLCYSRPCGPHGRCRSREGGYTCLCLDGY. Cystine bridges form between Cys-1292–Cys-1303, Cys-1297–Cys-1312, Cys-1314–Cys-1323, Cys-1332–Cys-1343, Cys-1337–Cys-1353, and Cys-1355–Cys-1365. The EGF-like 3; calcium-binding domain maps to 1328–1366; that stretch reads HSGRCTPGVCKNGGTCVNLLVGGFKCDCPSGDFEKPFCQ. In terms of domain architecture, Laminin G-like 1 spans 1367–1571; sequence VTTRSFPARS…IANNGTVPGC (205 aa). Residues Asn-1501 and Asn-1565 are each glycosylated (N-linked (GlcNAc...) asparagine). 4 cysteine pairs are disulfide-bonded: Cys-1545-Cys-1571, Cys-1578-Cys-1589, Cys-1583-Cys-1598, and Cys-1600-Cys-1609. Residues 1574 to 1610 enclose the EGF-like 4; calcium-binding domain; it reads KKIVCDSSICHNGGTCVNQWNAFSCECPLGFGGKSCA. Asn-1591 is modified ((3R)-3-hydroxyasparagine). One can recognise a Laminin G-like 2 domain in the interval 1614 to 1791; that stretch reads ANPQRFLGSS…GESINVEPGC (178 aa). Asn-1741 is a glycosylation site (N-linked (GlcNAc...) asparagine). Residues 1787-1829 form the EGF-like 5; calcium-binding domain; the sequence is VEPGCSWPDPCDSNPCPTNSYCSNDWDSYSCSCVLGYYGDNCT. Intrachain disulfides connect Cys-1791–Cys-1802, Cys-1797–Cys-1817, Cys-1819–Cys-1828, Cys-1832–Cys-1843, Cys-1837–Cys-1855, Cys-1857–Cys-1866, Cys-1887–Cys-1899, Cys-1889–Cys-1906, Cys-1908–Cys-1921, Cys-1924–Cys-1936, Cys-1926–Cys-1943, Cys-1945–Cys-1954, and Cys-1957–Cys-1969. Asn-1827 carries N-linked (GlcNAc...) asparagine glycosylation. Residues 1830-1867 enclose the EGF-like 6; calcium-binding domain; that stretch reads NVCDLNPCEHQSVCTRKPNTPHGYICECLPNYLGPYCE. Residues 1883–1922 form the EGF-like 7; calcium-binding domain; the sequence is TCGPCNCDVSKGFDPDCNKTSGECHCKENHYRPPGSPTCL. N-linked (GlcNAc...) asparagine glycosylation is present at Asn-1900. Residues 1924-1971 form the Laminin EGF-like domain; sequence CDCYPTGSLSRVCDPEDGQCPCKPGVIGRQCDRCDNPFAEVTTNGCEV. N-linked (GlcNAc...) asparagine glycans are attached at residues Asn-2024, Asn-2043, and Asn-2061. The 171-residue stretch at 2199–2369 folds into the GAIN-B domain; sequence ETTVILPESV…AVLMDMSRRE (171 aa). Residues 2216 to 2241 form a disordered region; sequence VRSAGPGEAQETEELARRQRRHPELS. 2 disulfide bridges follow: Cys-2319–Cys-2351 and Cys-2339–Cys-2353. A GPS region spans residues 2319–2369; it reads CVFWNHSILVSGTGGWSARGCEVVFRNESHVSCQCNHMTSFAVLMDMSRRE. N-linked (GlcNAc...) asparagine glycosylation is found at Asn-2323 and Asn-2345. Residues 2381 to 2401 form a helical membrane-spanning segment; it reads YVALGVTLAALMLTFLFLTLL. The Cytoplasmic portion of the chain corresponds to 2402-2413; it reads RALRSNQHGIRR. A helical membrane pass occupies residues 2414 to 2433; sequence NLTAALGLAQLVFLLGINQA. The Extracellular segment spans residues 2434-2438; sequence DLPFA. Residues 2439-2459 traverse the membrane as a helical segment; sequence CTVIAILLHFLYLCTFSWALL. Topologically, residues 2460-2480 are cytoplasmic; sequence EALHLYRALTEVRDVNASPMR. Residues 2481–2501 form a helical membrane-spanning segment; that stretch reads FYYMLGWGVPAFITGLAVGLD. Topologically, residues 2502 to 2518 are extracellular; the sequence is PEGYGNPDFCWLSVYDT. A helical membrane pass occupies residues 2519-2539; that stretch reads LIWSFAGPVAFAVSMSVFLYI. Over 2540–2563 the chain is Cytoplasmic; that stretch reads LSARASCAAQRQGFEKKGPVSGLR. The helical transmembrane segment at 2564–2584 threads the bilayer; that stretch reads SSFTVLLLLSATWLLALLSVN. At 2585–2591 the chain is on the extracellular side; it reads SDTLLFH. Residues 2592-2612 traverse the membrane as a helical segment; that stretch reads YLFAACNCVQGPFIFLSYVVL. At 2613 to 2919 the chain is on the cytoplasmic side; it reads SKEVRKALKF…SEFLFFNFLH (307 aa). The disordered stretch occupies residues 2690 to 2884; it reads LNPGQVPPGL…PPRPPPRQSL (195 aa). Over residues 2718-2730 the composition is skewed to acidic residues; sequence TDSDSDLSLEDDQ. The span at 2791–2800 shows a compositional bias: polar residues; it reads GTTTKENSGS. Positions 2803–2815 are enriched in basic and acidic residues; that stretch reads LEERPRENGDALT. The span at 2857 to 2868 shows a compositional bias: low complexity; it reads GTGSSRGSSISE.

Belongs to the G-protein coupled receptor 2 family. LN-TM7 subfamily. Heterodimer of 2 chains generated by proteolytic processing; the large extracellular N-terminal fragment and the membrane-bound C-terminal fragment predominantly remain associated and non-covalently linked. In terms of processing, the iron and 2-oxoglutarate dependent 3-hydroxylation of aspartate and asparagine is (R) stereospecific within EGF domains. Autoproteolytically processed at the GPS region of the GAIN-B domain; this cleavage modulates receptor activity. As to expression, expressed in the CNS and in the eye.

It localises to the cell membrane. In terms of biological role, receptor that may have an important role in cell/cell signaling during nervous system formation. The chain is Cadherin EGF LAG seven-pass G-type receptor 2 from Mus musculus (Mouse).